The following is a 194-amino-acid chain: UPF0232 protein in recF-gyrB intergenic region (194 aa).

The segment covering 1–14 (MTGPFDDDGPEEDA) has biased composition (acidic residues). The tract at residues 1 to 81 (MTGPFDDDGP…GPGPDARDPQ (81 aa)) is disordered. Residues 30–52 (DLVRRTLEEARGAARSQGKDVGR) are compositionally biased toward basic and acidic residues.

The protein belongs to the UPF0232 family.

This Mycolicibacterium smegmatis (Mycobacterium smegmatis) protein is UPF0232 protein in recF-gyrB intergenic region.